A 469-amino-acid polypeptide reads, in one-letter code: Trehalose-6-phosphate synthase (469 aa).

Residue R10 coordinates D-glucose 6-phosphate. 22–23 (GG) is a binding site for UDP-alpha-D-glucose. 2 residues coordinate D-glucose 6-phosphate: Y77 and D131. Residues R262 and K267 each contribute to the UDP-alpha-D-glucose site. R300 contacts D-glucose 6-phosphate. Residue 365 to 369 (LVAKE) coordinates UDP-alpha-D-glucose.

This sequence belongs to the glycosyltransferase 20 family. In terms of assembly, homotetramer.

The enzyme catalyses D-glucose 6-phosphate + UDP-alpha-D-glucose = alpha,alpha-trehalose 6-phosphate + UDP + H(+). It functions in the pathway glycan biosynthesis; trehalose biosynthesis. Probably involved in the osmoprotection via the biosynthesis of trehalose. Catalyzes the transfer of glucose from UDP-alpha-D-glucose (UDP-Glc) to D-glucose 6-phosphate (Glc-6-P) to form trehalose-6-phosphate. Acts with retention of the anomeric configuration of the UDP-sugar donor. The polypeptide is Trehalose-6-phosphate synthase (Sodalis glossinidius (strain morsitans)).